The primary structure comprises 89 residues: Putative membrane protein insertion efficiency factor (89 aa).

The tract at residues 68–89 (VPPPNSDARNAPHEAEASSHRL) is disordered. Positions 77–89 (NAPHEAEASSHRL) are enriched in basic and acidic residues.

The protein belongs to the UPF0161 family.

It is found in the cell inner membrane. In terms of biological role, could be involved in insertion of integral membrane proteins into the membrane. The sequence is that of Putative membrane protein insertion efficiency factor from Burkholderia thailandensis (strain ATCC 700388 / DSM 13276 / CCUG 48851 / CIP 106301 / E264).